The primary structure comprises 1069 residues: Carbamoyl phosphate synthase large chain (1069 aa).

The interval 1 to 401 (MPLNKDIKKV…AFLKGIRSLE (401 aa)) is carboxyphosphate synthetic domain. ATP-binding residues include Arg-129, Arg-169, Gly-175, Gly-176, Lys-208, Val-210, Glu-215, Gly-241, Ile-242, His-243, Gln-284, and Glu-298. An ATP-grasp 1 domain is found at 133-327 (RDMMNRIGEP…IAKLAAKIAL (195 aa)). Mg(2+)-binding residues include Gln-284, Glu-298, and Asn-300. Mn(2+)-binding residues include Gln-284, Glu-298, and Asn-300. The tract at residues 402-549 (IGKYSLDHNK…YSTYEQYDEV (148 aa)) is oligomerization domain. The carbamoyl phosphate synthetic domain stretch occupies residues 550-932 (EVSNNKKVIV…ALYKGFVGAY (383 aa)). The region spanning 674–864 (DELLERLGIS…IVDLATQVML (191 aa)) is the ATP-grasp 2 domain. ATP is bound by residues Arg-710, Lys-749, Leu-751, Glu-755, Gly-780, Val-781, His-782, Ser-783, Gln-823, and Glu-835. Positions 823, 835, and 837 each coordinate Mg(2+). Mn(2+) is bound by residues Gln-823, Glu-835, and Asn-837. Positions 932–1069 (YMYPSKEKGK…KDLEVFNIAK (138 aa)) constitute an MGS-like domain. Residues 933–1069 (MYPSKEKGKI…KDLEVFNIAK (137 aa)) form an allosteric domain region.

The protein belongs to the CarB family. In terms of assembly, composed of two chains; the small (or glutamine) chain promotes the hydrolysis of glutamine to ammonia, which is used by the large (or ammonia) chain to synthesize carbamoyl phosphate. Tetramer of heterodimers (alpha,beta)4. Requires Mg(2+) as cofactor. Mn(2+) serves as cofactor.

It catalyses the reaction hydrogencarbonate + L-glutamine + 2 ATP + H2O = carbamoyl phosphate + L-glutamate + 2 ADP + phosphate + 2 H(+). The catalysed reaction is hydrogencarbonate + NH4(+) + 2 ATP = carbamoyl phosphate + 2 ADP + phosphate + 2 H(+). It participates in amino-acid biosynthesis; L-arginine biosynthesis; carbamoyl phosphate from bicarbonate: step 1/1. Its pathway is pyrimidine metabolism; UMP biosynthesis via de novo pathway; (S)-dihydroorotate from bicarbonate: step 1/3. In terms of biological role, large subunit of the glutamine-dependent carbamoyl phosphate synthetase (CPSase). CPSase catalyzes the formation of carbamoyl phosphate from the ammonia moiety of glutamine, carbonate, and phosphate donated by ATP, constituting the first step of 2 biosynthetic pathways, one leading to arginine and/or urea and the other to pyrimidine nucleotides. The large subunit (synthetase) binds the substrates ammonia (free or transferred from glutamine from the small subunit), hydrogencarbonate and ATP and carries out an ATP-coupled ligase reaction, activating hydrogencarbonate by forming carboxy phosphate which reacts with ammonia to form carbamoyl phosphate. The polypeptide is Carbamoyl phosphate synthase large chain (Clostridium beijerinckii (strain ATCC 51743 / NCIMB 8052) (Clostridium acetobutylicum)).